Reading from the N-terminus, the 83-residue chain is Mu-theraphotoxin-Hhn2p (83 aa).

The first 21 residues, 1-21, serve as a signal peptide directing secretion; that stretch reads MKASMYLALAGLVLLFVVGYA. Positions 22–48 are excised as a propeptide; that stretch reads SESEEKEFPRELLSKIFAVDDFKGEER. Intrachain disulfides connect C50-C65, C57-C70, and C64-C77. Residue L81 is modified to Leucine amide.

It belongs to the neurotoxin 10 (Hwtx-1) family. 15 (Hntx-3) subfamily. Monomer. Expressed by the venom gland.

It is found in the secreted. Lethal neurotoxin. Selectively blocks tetrodotoxin-sensitive voltage-gated sodium channels (Nav). Does not affect tetrodotoxin-resistant voltage-gated sodium channels or calcium channels. The sequence is that of Mu-theraphotoxin-Hhn2p from Cyriopagopus hainanus (Chinese bird spider).